Reading from the N-terminus, the 186-residue chain is Ribosomal RNA small subunit methyltransferase G (186 aa).

S-adenosyl-L-methionine contacts are provided by residues Gly-59, Phe-64, 110 to 111, and Arg-124; that span reads IE.

It belongs to the methyltransferase superfamily. RNA methyltransferase RsmG family.

It is found in the cytoplasm. The catalysed reaction is guanosine(527) in 16S rRNA + S-adenosyl-L-methionine = N(7)-methylguanosine(527) in 16S rRNA + S-adenosyl-L-homocysteine. Functionally, specifically methylates the N7 position of guanine in position 527 of 16S rRNA. This is Ribosomal RNA small subunit methyltransferase G from Campylobacter curvus (strain 525.92).